We begin with the raw amino-acid sequence, 554 residues long: Rab GTPase-binding effector protein 2 (554 aa).

Low complexity predominate over residues 1–15 (MAAAPAALALDPQPQ). Disordered stretches follow at residues 1–29 (MAAA…ELSR), 167–250 (IQRR…ETAS), and 375–395 (EQLP…DEAL). The stretch at 15–173 (QEEQKDASES…IQEIQRRPRQ (159 aa)) forms a coiled coil. Over residues 16-29 (EEQKDASESSELSR) the composition is skewed to basic and acidic residues. Ser176, Ser180, Ser187, and Ser191 each carry phosphoserine. Positions 274-512 (DSQWEQLQVE…LETSEQVQRD (239 aa)) form a coiled coil. Positions 377–386 (LPSSALQGSE) are enriched in polar residues.

The protein belongs to the rabaptin family. As to quaternary structure, heterodimer with RABGEF1. The dimer binds RAB5A that has been activated by GTP-binding. Interacts with SDCCAG8; this interaction is important for ciliogenesis regulation. Interacts with RAB4A; this interaction may mediate VEGFR2 cell surface expression.

Its subcellular location is the cytoplasm. It is found in the early endosome. The protein localises to the cytoskeleton. The protein resides in the microtubule organizing center. It localises to the centrosome. Its subcellular location is the cilium basal body. In terms of biological role, plays a role in membrane trafficking and in homotypic early endosome fusion. Participates in arteriogenesis by regulating vascular endothelial growth factor receptor 2/VEGFR2 cell surface expression and endosomal trafficking. By interacting with SDCCAG8, localizes to centrosomes and plays a critical role in ciliogenesis. This is Rab GTPase-binding effector protein 2 (Rabep2) from Rattus norvegicus (Rat).